Here is a 181-residue protein sequence, read N- to C-terminus: Immunity-related GTPase family M protein (181 aa).

The 150-residue stretch at 32–181 (TPVNITMAGD…NLQKERVCEY (150 aa)) folds into the IRG-type G domain. GTP is bound by residues 41-48 (DSGNGMST), 66-70 (TELVK), and 147-149 (KLD).

This sequence belongs to the TRAFAC class dynamin-like GTPase superfamily. IRG family. As to quaternary structure, interacts with ULK1; promoting the coassembly of ULK1 and BECN1. Interacts with BECN1; enhancing BECN1-interacting partners and influencing the composition of the BECN1 complex. Interacts with ATG16L1. Interacts with NOD2; promoting IRGM 'Lys-63'-linked polyubiquitination, which is required for interactions with the core autophagy factors. Interacts with STX17; promoting STX17 recruitment to autophagosomes. Interacts with ATG8 proteins (GABARAP, GABARAPL1, GABARAPL2, MAP1LC3A, MAP1LC3B and MAP1LC3C); promoting STX17 recruitment to autophagosomes. Interacts with TFEB; promoting association between TFEB and PPP3CB and TFEB dephosphorylation. Interacts with PPP3CB; promoting association between TFEB and PPP3CB and TFEB dephosphorylation. Interacts with NLRP3; preventing NLRP3 inflammasome assembly and promoting SQSTM1/p62-dependent autophagic degradation of NLRP3. Interacts with CGAS; promoting SQSTM1/p62-dependent autophagic degradation of CGAS. Interacts with RIGI/RIG-I; promoting SQSTM1/p62-dependent autophagic degradation of RIGI/RIG-I. Interacts with NOD1; promoting SQSTM1/p62-dependent autophagic degradation of RIGI/RIG-I. Interacts with NOD2; promoting SQSTM1/p62-dependent autophagic degradation of RIGI/RIG-I. Interacts with RIPK2; promoting SQSTM1/p62-dependent autophagic degradation of RIGI/RIG-I. In terms of processing, ubiquitinated via 'Lys-63'-linked polyubiquitination in a NOD2-dependent process. 'Lys-63'-linked polyubiquitination is required for interactions with the core autophagy factors. Widely expressed (at protein level). Expressed in several tissues including colon, small bowel and peripheral blood leukocytes.

Its subcellular location is the golgi apparatus membrane. It localises to the cell membrane. The protein localises to the cytoplasmic vesicle. The protein resides in the phagosome membrane. It is found in the autophagosome membrane. Its subcellular location is the lysosome membrane. It localises to the late endosome membrane. The protein localises to the mitochondrion membrane. The protein resides in the cell projection. It is found in the phagocytic cup. Its subcellular location is the mitochondrion. The enzyme catalyses GTP + H2O = GDP + phosphate + H(+). Its function is as follows. Immunity-related GTPase that plays important roles in innate immunity and inflammatory response. Acts as a dynamin-like protein that binds to intracellular membranes and promotes remodeling and trafficking of those membranes. Required for clearance of acute protozoan and bacterial infections by interacting with autophagy and lysosome regulatory proteins, thereby promoting the fusion of phagosomes with lysosomes for efficient degradation of cargo including microbes. Regulates selective autophagy, including xenophagy and mitophagy, both directly and indirectly. Directly regulates autophagy by acting as a molecular adapter that promotes the coassembly of the core autophagy machinery to mediate antimicrobial defense: IRGM (1) activates AMPK, which in turn phosphorylates ULK1 and BECN1 to induce autophagy, (2) promotes the coassembly of ULK1 and BECN1, enhancing BECN1-interacting partners and (3) influences the composition of the BECN1 complex, by competing with the negative regulators BCL2 and RUBCN, to trigger autophagy. Also activates autophagy by promoting recruitment of STX17 to autophagosomes. In collaboration with ATG8 proteins, regulate lysosomal biogenesis, a fundamental process for any autophagic pathway, by promoting TFEB dephosphorylation. Also modulates autophagy by assisting with autophagosome formation and preventing lysosomal deacidification. While activating autophagy, acts as a key negative regulator of the inflammatory and interferon responses both by (1) promoting mitophagy and (2) mediating autophagy-dependent degradation of effectors of the inflammatory response. Promotes degradation of damaged and IFNG/IFN-gamma-stressed mitochondria via mitophagy, preventing cytosolic release of ligands that activate inflammation. Acts as a suppressor of inflammation by promoting recruitment of inflammation effectors, such as CGAS, RIGI/RIG-I and NLRP3, to autophagosome membranes, leading to their SQSTM1/p62-dependent autophagic degradation. Also directly inhibits assembly of the NLRP3 inflammasome by preventing the association between NLRP3 and PYCARD. Acts as a negative regulator of antiviral innate immune response by suppressing the RIPK2-dependent pro-inflammatory response: mediates recruitment of RIPosomes, composed of RIPK2 and NOD1 or NOD2, to autophagosome membranes, promoting their SQSTM1/p62-dependent autophagic degradation. Functionally, acts as a positive regulator of mitophagy in response to intracellular mycobacteria infection: specifically binds cardiolipin, leading to its translocation to mitochondria, where it promotes affected mitochondrial fission and mitophagy. (Microbial infection) Following infection by hepatitis C virus (HCV), promotes HCV-triggered membrane remodeling, leading to autophagy and Golgi fragmentation, a step required for HCV replication. This is Immunity-related GTPase family M protein from Homo sapiens (Human).